The following is a 208-amino-acid chain: Protein-L-isoaspartate O-methyltransferase (208 aa).

Residue serine 59 is part of the active site.

Belongs to the methyltransferase superfamily. L-isoaspartyl/D-aspartyl protein methyltransferase family.

It localises to the cytoplasm. The enzyme catalyses [protein]-L-isoaspartate + S-adenosyl-L-methionine = [protein]-L-isoaspartate alpha-methyl ester + S-adenosyl-L-homocysteine. Functionally, catalyzes the methyl esterification of L-isoaspartyl residues in peptides and proteins that result from spontaneous decomposition of normal L-aspartyl and L-asparaginyl residues. It plays a role in the repair and/or degradation of damaged proteins. The protein is Protein-L-isoaspartate O-methyltransferase of Klebsiella pneumoniae (strain 342).